The following is a 154-amino-acid chain: Large ribosomal subunit protein uL13 (154 aa).

This sequence belongs to the universal ribosomal protein uL13 family. As to quaternary structure, part of the 50S ribosomal subunit.

Its function is as follows. This protein is one of the early assembly proteins of the 50S ribosomal subunit, although it is not seen to bind rRNA by itself. It is important during the early stages of 50S assembly. The sequence is that of Large ribosomal subunit protein uL13 from Rhodopseudomonas palustris (strain BisB18).